The following is a 187-amino-acid chain: Threonylcarbamoyl-AMP synthase (187 aa).

The YrdC-like domain occupies 4 to 187 (NHTDDPFLLD…GHSGQTIRDN (184 aa)). Positions 168–187 (GSRSPSKIRHGHSGQTIRDN) are disordered.

This sequence belongs to the SUA5 family. TsaC subfamily.

Its subcellular location is the cytoplasm. The enzyme catalyses L-threonine + hydrogencarbonate + ATP = L-threonylcarbamoyladenylate + diphosphate + H2O. In terms of biological role, required for the formation of a threonylcarbamoyl group on adenosine at position 37 (t(6)A37) in tRNAs that read codons beginning with adenine. Catalyzes the conversion of L-threonine, HCO(3)(-)/CO(2) and ATP to give threonylcarbamoyl-AMP (TC-AMP) as the acyladenylate intermediate, with the release of diphosphate. The protein is Threonylcarbamoyl-AMP synthase of Pseudoalteromonas atlantica (strain T6c / ATCC BAA-1087).